The primary structure comprises 262 residues: Nickel import ATP-binding protein NikD (262 aa).

The ABC transporter domain maps to 6–249 (LAIEGLTATT…PGHEVTRMLV (244 aa)). Residue 42–49 (GASGSGKS) coordinates ATP.

It belongs to the ABC transporter superfamily. Nickel importer (TC 3.A.1.5.3) family. The complex is composed of two ATP-binding proteins (NikD and NikE), two transmembrane proteins (NikB and NikC) and a solute-binding protein (NikA).

It is found in the cell inner membrane. The enzyme catalyses Ni(2+)(out) + ATP + H2O = Ni(2+)(in) + ADP + phosphate + H(+). Its function is as follows. Part of the ABC transporter complex NikABCDE involved in nickel import. Responsible for energy coupling to the transport system. In Brucella abortus biovar 1 (strain 9-941), this protein is Nickel import ATP-binding protein NikD.